The sequence spans 695 residues: MQTFFIAPTDFGVGLTSISLGLVRTLERAGLKVGFFKPIAQPHPGDTGPERSTELVARTHGIKPPVPLSLAHVERMLGDGQLDELLEEIIRLYQQACVGNDVVVVEGMVPTRHASYAARVNLHLAKSLDAEVILVSAPENEVLSELSGRVELQAQLFGGPRDPKVLGVILNKVRTDESMADFATRLREHSPLLRGNDFRLLGCIPYQPELNAPRTRDVAELLGAQVLNAGDYEQRRMSKIIICARTVANTVPLLTSGTLVVTPGDRDDIILAVSLAAINGVPLAGLLLTSDSKPDVRILGLCRGALQAGLPILSVSTGSYDTANQLNSLNREIPVDDRERAEFITDFVASHLDAAWLHQRCGTPRELRLSPAVFRYQLIQRAQQANKRIVLPEGAEPLLVQAAAICQARGIARCVLLAKPEDVDAVARAQGITLPPGLEILDPELIRGRYVEPMVELRKSKNLNAPMAEQQLEDPVVIGTMMLALDEVDGLVSGLVHSTANTIRPALQLIKTAPGSSLVSSVFFMLFPEQVLVYGDCVMNPHPSAAELAEIAQQSAASAQAFGIAPRVAMISYSSDSASDEEVEKVREATRLAQDAAQELLIDGPLQYDAAANPAIARELAPASPVAGRATVFVFPDLNTGNTTHKAVQRSADGVSLGPMLQGLRKPVNDLPRGAQVDDIVHTIALTAIQASVAR.

The interval 374-695 (FRYQLIQRAQ…LTAIQASVAR (322 aa)) is phosphate acetyltransferase.

In the N-terminal section; belongs to the CobB/CobQ family. The protein in the C-terminal section; belongs to the phosphate acetyltransferase and butyryltransferase family. Homohexamer.

The protein localises to the cytoplasm. The enzyme catalyses acetyl-CoA + phosphate = acetyl phosphate + CoA. It functions in the pathway metabolic intermediate biosynthesis; acetyl-CoA biosynthesis; acetyl-CoA from acetate: step 2/2. Its function is as follows. Involved in acetate metabolism. This chain is Phosphate acetyltransferase (pta), found in Pseudomonas putida (strain ATCC 47054 / DSM 6125 / CFBP 8728 / NCIMB 11950 / KT2440).